Here is a 195-residue protein sequence, read N- to C-terminus: MKEIVIASNNQGKINDFKVIFPDYHVIGISELILDFDVEETGSTFEENAILKSEAAAKALNKTVIADDSGLEVFALNGEPGIYSARYAGENKSDEANIEKLLNKLGNTTDRRAQFVCVISMSGPDMETKVFKGTVSGEIADGKYGENGFGYDPIFYVPKLDRTMAQLSKEQKGQISHRRNAINLLEAYLAGDQNV.

Ser8–Lys13 is a substrate binding site. 2 residues coordinate Mg(2+): Glu39 and Asp68. The Proton acceptor role is filled by Asp68. Substrate is bound by residues Ser69, Phe149–Asp152, Lys172, and His177–Arg178.

This sequence belongs to the HAM1 NTPase family. In terms of assembly, homodimer. It depends on Mg(2+) as a cofactor.

The enzyme catalyses XTP + H2O = XMP + diphosphate + H(+). It catalyses the reaction dITP + H2O = dIMP + diphosphate + H(+). It carries out the reaction ITP + H2O = IMP + diphosphate + H(+). In terms of biological role, pyrophosphatase that catalyzes the hydrolysis of nucleoside triphosphates to their monophosphate derivatives, with a high preference for the non-canonical purine nucleotides XTP (xanthosine triphosphate), dITP (deoxyinosine triphosphate) and ITP. Seems to function as a house-cleaning enzyme that removes non-canonical purine nucleotides from the nucleotide pool, thus preventing their incorporation into DNA/RNA and avoiding chromosomal lesions. In Staphylococcus aureus (strain MRSA252), this protein is dITP/XTP pyrophosphatase.